The primary structure comprises 491 residues: Glutamyl-tRNA(Gln) amidotransferase subunit A (491 aa).

Residues lysine 78 and serine 158 each act as charge relay system in the active site. Serine 182 acts as the Acyl-ester intermediate in catalysis.

Belongs to the amidase family. GatA subfamily. As to quaternary structure, heterotrimer of A, B and C subunits.

The enzyme catalyses L-glutamyl-tRNA(Gln) + L-glutamine + ATP + H2O = L-glutaminyl-tRNA(Gln) + L-glutamate + ADP + phosphate + H(+). In terms of biological role, allows the formation of correctly charged Gln-tRNA(Gln) through the transamidation of misacylated Glu-tRNA(Gln) in organisms which lack glutaminyl-tRNA synthetase. The reaction takes place in the presence of glutamine and ATP through an activated gamma-phospho-Glu-tRNA(Gln). The protein is Glutamyl-tRNA(Gln) amidotransferase subunit A of Afipia carboxidovorans (strain ATCC 49405 / DSM 1227 / KCTC 32145 / OM5) (Oligotropha carboxidovorans).